The following is a 328-amino-acid chain: Tetraacyldisaccharide 4'-kinase (328 aa).

ATP is bound at residue 55–62 (TAGGNGKT).

Belongs to the LpxK family.

The catalysed reaction is a lipid A disaccharide + ATP = a lipid IVA + ADP + H(+). It participates in glycolipid biosynthesis; lipid IV(A) biosynthesis; lipid IV(A) from (3R)-3-hydroxytetradecanoyl-[acyl-carrier-protein] and UDP-N-acetyl-alpha-D-glucosamine: step 6/6. In terms of biological role, transfers the gamma-phosphate of ATP to the 4'-position of a tetraacyldisaccharide 1-phosphate intermediate (termed DS-1-P) to form tetraacyldisaccharide 1,4'-bis-phosphate (lipid IVA). The protein is Tetraacyldisaccharide 4'-kinase of Escherichia coli O17:K52:H18 (strain UMN026 / ExPEC).